The primary structure comprises 2851 residues: Highly reducing polyketide synthase sthA (2851 aa).

Positions 8 to 415 (NEPIVIIGSG…GTNAHAIVEG (408 aa)) constitute a Ketosynthase family 3 (KS3) domain. A disordered region spans residues 304 to 324 (LDPESPNDRPQYIESHGTGTP). The acyl transferase (AT) domain stretch occupies residues 529–851 (IFTGQGAQYA…PYHGSLVRGE (323 aa)). The interval 926-1059 (HQLLGNVSPD…GELNILLVDD (134 aa)) is N-terminal hotdog fold. Residues 926 to 1235 (HQLLGNVSPD…FKPVGSDAKD (310 aa)) form the PKS/mFAS DH domain. The interval 949 to 1242 (PKEMTWLEGH…AKDDRNVFYK (294 aa)) is dehydratase (DH) domain. His-958 (proton acceptor; for dehydratase activity) is an active-site residue. The tract at residues 1076-1235 (MIPVQPSRLY…FKPVGSDAKD (160 aa)) is C-terminal hotdog fold. Asp-1137 functions as the Proton donor; for dehydratase activity in the catalytic mechanism. Residues 1390 to 1577 (QCTLWVAGVL…GIDTMSPPEL (188 aa)) are methyltransferase (MT) domain. A ketoreductase (KR)domain region spans residues 2079 to 2252 (TYWLVGLSGA…RSSVVNVGAI (174 aa)). In terms of domain architecture, Carrier spans 2360–2443 (ADITKVVQQA…DLAAESIPAE (84 aa)). Residue Ser-2399 is modified to O-(pantetheine 4'-phosphoryl)serine. The interval 2447 to 2496 (HVQQQQQQAGRQDASSNTSSDDETASTLPTSPESASPGTSTPVPEKDISP) is disordered. A compositionally biased stretch (polar residues) spans 2455 to 2488 (AGRQDASSNTSSDDETASTLPTSPESASPGTSTP). The tract at residues 2535 to 2767 (LTGCSGLLGH…DLVSVDTCCS (233 aa)) is reductase (R) domain.

Requires pantetheine 4'-phosphate as cofactor.

It carries out the reaction 7 malonyl-CoA + acetyl-CoA + 10 AH2 + 5 S-adenosyl-L-methionine + 2 H(+) = dehydroprobetaenone I + 10 A + 5 S-adenosyl-L-homocysteine + 7 CO2 + 8 CoA + 6 H2O. The protein operates within mycotoxin biosynthesis. Its function is as follows. Highly reducing polyketide synthase; part of the gene cluster that mediates the biosynthesis of the phytotoxin stemphyloxin II. The first step of the pathway is the synthesis of dehydroprobetaenone I by the polyketide synthase sthA and the enoyl reductase sthE via condensation of one acetyl-CoA starter unit with 7 malonyl-CoA units and 5 methylations. The C-terminal reductase (R) domain of sthA catalyzes the reductive release of the polyketide chain. Because sthA lacks a designated enoylreductase (ER) domain, the required activity is provided the enoyl reductase sthE. The short-chain dehydrogenase/reductase sthC then catalyzes reduction of dehydroprobetaenone I to probetaenone I. The cytochrome P450 monooxygenase sthF catalyzes successive epoxidation, oxidation (resulting from epoxide opening) and hydroxylation to install a tertiary alcohol in the decaline ring to yield betaenone C from dehydroprobetaenone I and betaenone B from probetaenone I. The FAD-linked oxidoreductase sthB is responsible for the conversion of betaenone C to betaenone A via an intramolecular aldol reaction between C-1 and C-17 to form the bridged tricyclic system in betaenone A. Finally, the cytochrome P450 monooxygenase sthD catalyzes the hydroxylation of C-15 to afford the final metabolite stemphyloxin II. This is Highly reducing polyketide synthase sthA from Phaeosphaeria nodorum (strain SN15 / ATCC MYA-4574 / FGSC 10173) (Glume blotch fungus).